A 132-amino-acid polypeptide reads, in one-letter code: MAGTLQFDIVSPERRLASFAATEVQVPGTDGDMTAMEGHAPTITTLRPGILRAHGPSGVQAYAVTGGFAEINATSISVLAEKAVAVEELTGTVLDEFIAEARELASVALPEDRDMAERTLNDMLALKASSGH.

It belongs to the ATPase epsilon chain family. As to quaternary structure, F-type ATPases have 2 components, CF(1) - the catalytic core - and CF(0) - the membrane proton channel. CF(1) has five subunits: alpha(3), beta(3), gamma(1), delta(1), epsilon(1). CF(0) has three main subunits: a, b and c.

The protein resides in the cell inner membrane. In terms of biological role, produces ATP from ADP in the presence of a proton gradient across the membrane. This is ATP synthase epsilon chain 1 from Cereibacter sphaeroides (strain ATCC 17023 / DSM 158 / JCM 6121 / CCUG 31486 / LMG 2827 / NBRC 12203 / NCIMB 8253 / ATH 2.4.1.) (Rhodobacter sphaeroides).